The primary structure comprises 247 residues: Uridylate kinase (247 aa).

18–21 (KLSG) is a binding site for ATP. Residue glycine 60 coordinates UMP. Glycine 61 and arginine 65 together coordinate ATP. Residues aspartate 80 and 141-148 (TGNPFFTT) each bind UMP. ATP is bound by residues threonine 168, tyrosine 174, and aspartate 177.

It belongs to the UMP kinase family. Homohexamer.

It localises to the cytoplasm. It carries out the reaction UMP + ATP = UDP + ADP. The protein operates within pyrimidine metabolism; CTP biosynthesis via de novo pathway; UDP from UMP (UMPK route): step 1/1. Its activity is regulated as follows. Inhibited by UTP. Functionally, catalyzes the reversible phosphorylation of UMP to UDP. The sequence is that of Uridylate kinase from Ectopseudomonas mendocina (strain ymp) (Pseudomonas mendocina).